The following is a 333-amino-acid chain: Electron transfer flavoprotein subunit alpha, mitochondrial (333 aa).

Residues 1–19 (MFRAAAPGQLRRAASLLRF) constitute a mitochondrion transit peptide. The tract at residues 20–204 (QSTLVIAEHA…GISEWLDQKL (185 aa)) is domain I. Lys59 carries the N6-acetyllysine; alternate modification. Residue Lys59 is modified to N6-succinyllysine; alternate. Position 62 is an N6-acetyllysine (Lys62). N6-acetyllysine; alternate is present on Lys69. N6-succinyllysine; alternate is present on Lys69. Lys75 bears the N6-acetyllysine mark. Lys85 is subject to N6-acetyllysine; alternate. Position 85 is an N6-succinyllysine; alternate (Lys85). Phosphothreonine is present on Thr93. N6-acetyllysine is present on residues Lys101 and Lys139. Position 140 is a phosphoserine (Ser140). Position 158 is an N6-acetyllysine; alternate (Lys158). Lys158 carries the post-translational modification N6-succinyllysine; alternate. Residue Lys164 is modified to N6-acetyllysine. The residue at position 187 (Lys187) is an N6-succinyllysine. An N6-acetyllysine; alternate modification is found at Lys203. An N6-succinyllysine; alternate modification is found at Lys203. Positions 205–333 (TKSDRPELTG…PEMTEILKKK (129 aa)) are domain II. Lys216 is modified (N6-succinyllysine). An FAD-binding site is contributed by Arg223. Residues Lys226 and Lys232 each carry the N6-acetyllysine; alternate modification. N6-succinyllysine; alternate occurs at positions 226 and 232. FAD contacts are provided by residues Ser248, 263–266 (VGQT), 281–286 (SGAIQH), and Asn300. An N6-succinyllysine modification is found at Lys301. An FAD-binding site is contributed by 318–319 (DL).

Belongs to the ETF alpha-subunit/FixB family. As to quaternary structure, heterodimer composed of ETFA and ETFB. Identified in a complex that contains ETFA, ETFB and ETFRF1. Interaction with ETFRF1 promotes dissociation of the bound FAD and loss of electron transfer activity. Interacts with TASOR. FAD is required as a cofactor.

Its subcellular location is the mitochondrion matrix. Functionally, heterodimeric electron transfer flavoprotein that accepts electrons from several mitochondrial dehydrogenases, including acyl-CoA dehydrogenases, glutaryl-CoA and sarcosine dehydrogenase. It transfers the electrons to the main mitochondrial respiratory chain via ETF-ubiquinone oxidoreductase (ETF dehydrogenase). Required for normal mitochondrial fatty acid oxidation and normal amino acid metabolism. The protein is Electron transfer flavoprotein subunit alpha, mitochondrial (Etfa) of Rattus norvegicus (Rat).